Reading from the N-terminus, the 166-residue chain is Ribosomal RNA large subunit methyltransferase H (166 aa).

S-adenosyl-L-methionine-binding positions include leucine 85, glycine 116, and 135 to 140 (ISKMTF).

It belongs to the RNA methyltransferase RlmH family. In terms of assembly, homodimer.

It is found in the cytoplasm. The catalysed reaction is pseudouridine(1915) in 23S rRNA + S-adenosyl-L-methionine = N(3)-methylpseudouridine(1915) in 23S rRNA + S-adenosyl-L-homocysteine + H(+). Its function is as follows. Specifically methylates the pseudouridine at position 1915 (m3Psi1915) in 23S rRNA. The sequence is that of Ribosomal RNA large subunit methyltransferase H from Francisella tularensis subsp. holarctica (strain FTNF002-00 / FTA).